Consider the following 472-residue polypeptide: MKKFMDDNFLLSNDTAEELFHHYAKDMPIIDYHCHLSPKEIYMNKRYSNITEVWLYGDHYKWRAMRAAGVEESLITGDANDYDKFMAWAETVPKLIGNPLYNWTHLELQRYFGVDEILNKESGPSIWEKVNKCLAQDDFGVRELINQSNVQVVCTTDDPIDDLSFHQMLVEDDDFSVKVLPGFRPDKAIEINQEGFIDYVDSLEKVTSHSTKTYDGFLRALKSRVDYFHQNGCSVADHALNTMMFTETTKEKARNYYEKAMNGQKLSPKEESDFKSFTLVFLGEQYADKGWVMQYHINALRNNNSRMYNNLGPDTGYDAMNDEVISKPLVNLLNELEKKDRLPKTILYSLNPNDNPVIASIIGSFQRGGVPGKLQFGTAWWFNDTKSGMIKQMQTLADIGVFSQFIGMLTDSRSFLSYPRHEYFRRLVCSLIGEWVHNGEVPYDLKSLGEIVQDISYYNAARYFDFGLLSDE.

The protein belongs to the metallo-dependent hydrolases superfamily. Uronate isomerase family.

It carries out the reaction D-glucuronate = D-fructuronate. The enzyme catalyses aldehydo-D-galacturonate = keto-D-tagaturonate. It participates in carbohydrate metabolism; pentose and glucuronate interconversion. The sequence is that of Uronate isomerase from Oceanobacillus iheyensis (strain DSM 14371 / CIP 107618 / JCM 11309 / KCTC 3954 / HTE831).